The sequence spans 406 residues: Indole-3-pyruvate monooxygenase YUCCA1 (406 aa).

21–26 contributes to the FAD binding site; that stretch reads GAGPSG. An NADP(+)-binding site is contributed by 184–189; it reads GCGNSG.

Belongs to the FMO family. It depends on FAD as a cofactor. As to expression, expressed in coleoptile tips, root tips, leaf blade tips, shoot apical meristem, vasculature of stems and flowers.

It carries out the reaction indole-3-pyruvate + NADPH + O2 + H(+) = (indol-3-yl)acetate + CO2 + NADP(+) + H2O. Involved in auxin biosynthesis. Converts the indole-3-pyruvic acid (IPA) produced by the TAA family to indole-3-acetic acid (IAA). Functions downstream of TAR2 in auxin biosynthesis. Functions upstream of WOX11, a transcription factor that promotes the development of crown roots. The protein is Indole-3-pyruvate monooxygenase YUCCA1 of Oryza sativa subsp. japonica (Rice).